The following is a 442-amino-acid chain: Zinc finger protein sfp1 (442 aa).

Residues 193 to 208 (AASSDMSSDEASSQAE) show a composition bias toward low complexity. Disordered stretches follow at residues 193 to 219 (AASS…MPES) and 304 to 333 (SPFV…HDSP). C2H2-type zinc fingers lie at residues 350-375 (YKCP…LHGH) and 399-422 (YRCE…THSH).

It is found in the cytoplasm. It localises to the nucleus. The protein is Zinc finger protein sfp1 (sfp1) of Schizosaccharomyces pombe (strain 972 / ATCC 24843) (Fission yeast).